Here is a 428-residue protein sequence, read N- to C-terminus: ETS domain-containing protein Elk-1 (428 aa).

Positions 5-86 (VTLWQFLLQL…SGQKFVYKFV (82 aa)) form a DNA-binding region, ETS. 3 disordered regions span residues 121–149 (AAPG…ARSS), 165–205 (QSLQ…SPLE), and 228–358 (NLKS…SLLP). The span at 177–205 (PAVVLPSAAPAGAAAPPSGSRSTSPSPLE) shows a compositional bias: low complexity. Glycyl lysine isopeptide (Lys-Gly) (interchain with G-Cter in SUMO) cross-links involve residues Lys230, Lys249, and Lys254. Over residues 248 to 261 (VKVEGPKEELEVAG) the composition is skewed to basic and acidic residues. Ser324 carries the phosphoserine; by MAPK1 modification. Residues Thr336, Thr353, Thr363, and Thr368 each carry the phosphothreonine; by MAPK1 modification. Residues 349 to 399 (GPALTPSLLPTHTLTPVLLTPSSLPPSIHFWSTLSPIAPRSPAKLSFQFPS) are sufficient for interaction with MAD2L2. An O-linked (GlcNAc) threonine glycan is attached at Thr381. Ser383 carries the post-translational modification Phosphoserine; by MAPK1 and MAPK8. Position 389 is a phosphoserine; by MAPK1 (Ser389). Thr417 is subject to Phosphothreonine; by MAPK1. Ser422 bears the Phosphoserine; by MAPK1 mark.

It belongs to the ETS family. In terms of assembly, interacts in its sumoylated form with PIAS2/PIASX which enhances its transcriptional activator activity. Interacts with MAD2L2; the interaction is direct and promotes phosphorylation by the kinases MAPK8 and/or MAPK9. Interacts with POU1F1. Post-translationally, sumoylation represses transcriptional activator activity as it results in recruitment of HDAC2 to target gene promoters which leads to decreased histone acetylation and reduced transactivator activity. It also regulates nuclear retention. In terms of processing, on mitogenic stimulation, phosphorylated on C-terminal serine and threonine residues by MAPK1. Ser-383 and Ser-389 are the preferred sites for MAPK1. In vitro, phosphorylation by MAPK1 potentiates ternary complex formation with the serum responses factors, SRE and SRF. Also phosphorylated on Ser-383 by MAPK8 and/or MAKP9. Phosphorylation leads to loss of sumoylation and restores transcriptional activator activity. Phosphorylated and activated by CAMK4, MAPK11, MAPK12 and MAPK14. Upon bFGF stimulus, phosphorylated by PAK1. Phosphorylated by PRP4K at Thr-417; phosphorylation activation ELK1 transcriptional activity. In terms of tissue distribution, lung and testis.

It is found in the nucleus. Transcription factor that binds to purine-rich DNA sequences. Forms a ternary complex with SRF and the ETS and SRF motifs of the serum response element (SRE) on the promoter region of immediate early genes such as FOS and IER2. Induces target gene transcription upon JNK and MAPK-signaling pathways stimulation. This Homo sapiens (Human) protein is ETS domain-containing protein Elk-1.